The sequence spans 343 residues: Ketol-acid reductoisomerase (NADP(+)) (343 aa).

The KARI N-terminal Rossmann domain occupies 7-186 (TTVYYDEDAD…GCTRAGVIET (180 aa)). NADP(+) is bound by residues 30-33 (YGSQ), Arg53, Ser56, Ser58, and 88-91 (DTIQ). His112 is a catalytic residue. Gly138 provides a ligand contact to NADP(+). In terms of domain architecture, KARI C-terminal knotted spans 187–329 (SFQEEVETDL…ENLRELFAWG (143 aa)). Residues Asp195, Glu199, Glu231, and Glu235 each contribute to the Mg(2+) site. Residue Ser256 coordinates substrate.

It belongs to the ketol-acid reductoisomerase family. Mg(2+) is required as a cofactor.

It catalyses the reaction (2R)-2,3-dihydroxy-3-methylbutanoate + NADP(+) = (2S)-2-acetolactate + NADPH + H(+). The catalysed reaction is (2R,3R)-2,3-dihydroxy-3-methylpentanoate + NADP(+) = (S)-2-ethyl-2-hydroxy-3-oxobutanoate + NADPH + H(+). It functions in the pathway amino-acid biosynthesis; L-isoleucine biosynthesis; L-isoleucine from 2-oxobutanoate: step 2/4. It participates in amino-acid biosynthesis; L-valine biosynthesis; L-valine from pyruvate: step 2/4. In terms of biological role, involved in the biosynthesis of branched-chain amino acids (BCAA). Catalyzes an alkyl-migration followed by a ketol-acid reduction of (S)-2-acetolactate (S2AL) to yield (R)-2,3-dihydroxy-isovalerate. In the isomerase reaction, S2AL is rearranged via a Mg-dependent methyl migration to produce 3-hydroxy-3-methyl-2-ketobutyrate (HMKB). In the reductase reaction, this 2-ketoacid undergoes a metal-dependent reduction by NADPH to yield (R)-2,3-dihydroxy-isovalerate. This chain is Ketol-acid reductoisomerase (NADP(+)), found in Haloarcula marismortui (strain ATCC 43049 / DSM 3752 / JCM 8966 / VKM B-1809) (Halobacterium marismortui).